The sequence spans 209 residues: Probable glutathione peroxidase 8 (209 aa).

An N-acetylmethionine modification is found at Met1. A helical membrane pass occupies residues 18–40 (VFAVLLSIVLCTVTLFLLQLKFL). Residue Cys79 is part of the active site.

It belongs to the glutathione peroxidase family.

The protein resides in the membrane. It catalyses the reaction 2 glutathione + H2O2 = glutathione disulfide + 2 H2O. This chain is Probable glutathione peroxidase 8 (GPX8), found in Homo sapiens (Human).